The primary structure comprises 153 residues: Aspartate carbamoyltransferase regulatory chain (153 aa).

Residues Cys109, Cys114, Cys138, and Cys141 each coordinate Zn(2+).

Belongs to the PyrI family. Contains catalytic and regulatory chains. Zn(2+) is required as a cofactor.

In terms of biological role, involved in allosteric regulation of aspartate carbamoyltransferase. The polypeptide is Aspartate carbamoyltransferase regulatory chain (Escherichia coli O7:K1 (strain IAI39 / ExPEC)).